The chain runs to 78 residues: Small ribosomal subunit protein eS21 (78 aa).

It belongs to the eukaryotic ribosomal protein eS21 family.

In Dictyostelium discoideum (Social amoeba), this protein is Small ribosomal subunit protein eS21 (rps21).